We begin with the raw amino-acid sequence, 436 residues long: Platelet-activating factor acetylhydrolase (436 aa).

Residues 1–21 (MAPPKLHTLFCLSGFLALVHP) form the signal peptide. 2 N-linked (GlcNAc...) asparagine glycosylation sites follow: asparagine 76 and asparagine 200. The Nucleophile role is filled by serine 271. Aspartate 294 (charge relay system) is an active-site residue. Asparagine 324 carries an N-linked (GlcNAc...) asparagine glycan. The active-site Charge relay system is the histidine 349.

This sequence belongs to the AB hydrolase superfamily. Lipase family. N-glycosylated. In terms of tissue distribution, plasma.

Its subcellular location is the secreted. It is found in the extracellular space. The catalysed reaction is a 1-O-alkyl-2-acetyl-sn-glycero-3-phosphocholine + H2O = a 1-O-alkyl-sn-glycero-3-phosphocholine + acetate + H(+). It catalyses the reaction 1-O-decyl-2-acetyl-sn-glycero-3-phosphocholine + H2O = 1-O-decyl-sn-glycero-3-phosphocholine + acetate + H(+). It carries out the reaction 1-O-dodecyl-2-acetyl-sn-glycero-3-phosphocholine + H2O = 1-O-dodecyl-sn-glycero-3-phosphocholine + acetate + H(+). The enzyme catalyses 1-O-tetradecyl-2-acetyl-sn-glycero-3-phosphocholine + H2O = 1-O-tetradecyl-sn-glycero-3-phosphocholine + acetate + H(+). The catalysed reaction is 1-O-hexadecyl-2-acetyl-sn-glycero-3-phosphocholine + H2O = 1-O-hexadecyl-sn-glycero-3-phosphocholine + acetate + H(+). It catalyses the reaction 1-O-octadecyl-2-acetyl-sn-glycero-3-phosphocholine + H2O = 1-O-octadecyl-sn-glycero-3-phosphocholine + acetate + H(+). It carries out the reaction 1-hexadecanoyl-2-acetyl-sn-glycero-3-phosphocholine + H2O = 1-hexadecanoyl-sn-glycero-3-phosphocholine + acetate + H(+). The enzyme catalyses 1-hexadecanoyl-2-propionyl-sn-glycero-3-phosphocholine + H2O = propanoate + 1-hexadecanoyl-sn-glycero-3-phosphocholine + H(+). The catalysed reaction is 1-hexadecanoyl-2-butanoyl-sn-glycero-3-phosphocholine + H2O = butanoate + 1-hexadecanoyl-sn-glycero-3-phosphocholine + H(+). It catalyses the reaction 1-hexadecanoyl-2-pentanoyl-sn-glycero-3-phosphocholine + H2O = pentanoate + 1-hexadecanoyl-sn-glycero-3-phosphocholine + H(+). It carries out the reaction 1-hexadecanoyl-2-glutaroyl-sn-glycero-3-phosphocholine + H2O = glutarate + 1-hexadecanoyl-sn-glycero-3-phosphocholine + H(+). The enzyme catalyses 1-hexadecanoyl-2-(5-oxopentanoyl)-sn-glycero-3-phosphocholine + H2O = 5-oxopentanoate + 1-hexadecanoyl-sn-glycero-3-phosphocholine + H(+). The catalysed reaction is 1-hexadecanoyl-2-(9-oxononanoyl)-sn-glycero-3-phosphocholine + H2O = 9-oxononanoate + 1-hexadecanoyl-sn-glycero-3-phosphocholine + H(+). It catalyses the reaction 1-hexadecanoyl-2-[9-hydroperoxy-(10E-octadecenoyl)]-sn-glycero-3-phosphocholine + H2O = 9-hydroperoxy-10E-octadecenoate + 1-hexadecanoyl-sn-glycero-3-phosphocholine + H(+). It carries out the reaction 1-hexadecanoyl-2-(10-hydroperoxy-8E-octadecenoyl)-sn-glycero-3-phosphocholine + H2O = 10-hydroperoxy-(8E)-octadecenoate + 1-hexadecanoyl-sn-glycero-3-phosphocholine + H(+). Its function is as follows. Lipoprotein-associated calcium-independent phospholipase A2 involved in phospholipid catabolism during inflammatory and oxidative stress response. At the lipid-aqueous interface, hydrolyzes the ester bond of fatty acyl group attached at sn-2 position of phospholipids (phospholipase A2 activity). Specifically targets phospholipids with a short-chain fatty acyl group at sn-2 position. Can hydrolyze phospholipids with long fatty acyl chains, only if they carry oxidized functional groups. Hydrolyzes and inactivates platelet-activating factor (PAF, 1-O-alkyl-2-acetyl-sn-glycero-3-phosphocholine), a potent pro-inflammatory signaling lipid that acts through PTAFR on various innate immune cells. Hydrolyzes oxidatively truncated phospholipids carrying an aldehyde group at omega position, preventing their accumulation in lipoprotein particles and uncontrolled pro-inflammatory effects. As part of high-density lipoprotein (HDL) particles, can hydrolyze phospholipids having long-chain fatty acyl hydroperoxides at sn-2 position and protect against potential accumulation of these oxylipins in the vascular wall. Catalyzes the release from membrane phospholipids of F2-isoprostanes, lipid biomarkers of cellular oxidative damage. This is Platelet-activating factor acetylhydrolase (PLA2G7) from Cavia porcellus (Guinea pig).